The primary structure comprises 400 residues: Signal recognition particle receptor FtsY (400 aa).

Disordered regions lie at residues 12–37 (TKKTNQVEQDEPILDQQDQQDQQEEQ) and 51–86 (NKIKKTKTSETKKQEKPIETLKEKKKREKQKEKDKK). Basic and acidic residues predominate over residues 51–72 (NKIKKTKTSETKKQEKPIETLK). GTP-binding positions include 192–199 (GVNGTGKT), 278–282 (DTAGR), and 342–345 (TKMD).

It belongs to the GTP-binding SRP family. FtsY subfamily. Part of the signal recognition particle protein translocation system, which is composed of SRP and FtsY.

Its subcellular location is the cell membrane. The protein resides in the cytoplasm. The enzyme catalyses GTP + H2O = GDP + phosphate + H(+). Functionally, involved in targeting and insertion of nascent membrane proteins into the cytoplasmic membrane. Acts as a receptor for the complex formed by the signal recognition particle (SRP) and the ribosome-nascent chain (RNC). This chain is Signal recognition particle receptor FtsY, found in Mycoplasma mycoides subsp. mycoides SC (strain CCUG 32753 / NCTC 10114 / PG1).